A 310-amino-acid chain; its full sequence is Thioredoxin reductase (310 aa).

34-41 (NGMQPGGQ) is an FAD binding site. A disulfide bond links C135 and C138. 281 to 290 (DVQDKIYRQA) is a binding site for FAD.

It belongs to the class-II pyridine nucleotide-disulfide oxidoreductase family. Homodimer. FAD is required as a cofactor.

The protein resides in the cytoplasm. It carries out the reaction [thioredoxin]-dithiol + NADP(+) = [thioredoxin]-disulfide + NADPH + H(+). This Rickettsia prowazekii (strain Madrid E) protein is Thioredoxin reductase (trxB).